A 420-amino-acid chain; its full sequence is Zinc finger and BTB domain-containing protein 42 (420 aa).

The 69-residue stretch at 24–92 (CDCTVLVGDA…MYEGRLDLHN (69 aa)) folds into the BTB domain. 2 disordered regions span residues 127-204 (TRTL…HPPC) and 222-247 (VKAE…PPPV). The segment covering 227–241 (DSFSEQDSSSPQSAD) has biased composition (low complexity). C2H2-type zinc fingers lie at residues 292–314 (CICP…LSAH), 332–354 (PTCP…ERTH), 360–382 (YTCV…AVVH), and 388–411 (HACR…RKFH).

It belongs to the krueppel C2H2-type zinc-finger protein family. ZBTB18 subfamily. Highly expressed in skeletal muscle and ovary (at protein level). Low expression in brain, lung, spleen, liver and heart (at protein level). Not detected in kidney and intestines (at protein level). Also observed in testis and, at lower levels, in stomach and nervous system.

The protein resides in the cytoplasm. It localises to the nucleus. The protein localises to the nucleoplasm. Its function is as follows. Transcriptional repressor. Specifically binds DNA and probably acts by recruiting chromatin remodeling multiprotein complexes. This Mus musculus (Mouse) protein is Zinc finger and BTB domain-containing protein 42 (Zbtb42).